Consider the following 460-residue polypeptide: Cysteine--tRNA ligase (460 aa).

Residue Cys-28 coordinates Zn(2+). The 'HIGH' region motif lies at 30–40 (MTVYDYCHLGH). Cys-209, His-234, and Glu-238 together coordinate Zn(2+). The 'KMSKS' region motif lies at 266–270 (KMSKS). Position 269 (Lys-269) interacts with ATP.

Belongs to the class-I aminoacyl-tRNA synthetase family. Monomer. Zn(2+) serves as cofactor.

It is found in the cytoplasm. The enzyme catalyses tRNA(Cys) + L-cysteine + ATP = L-cysteinyl-tRNA(Cys) + AMP + diphosphate. The protein is Cysteine--tRNA ligase of Pseudomonas paraeruginosa (strain DSM 24068 / PA7) (Pseudomonas aeruginosa (strain PA7)).